The sequence spans 207 residues: Outer-membrane lipoprotein LolB (207 aa).

The N-terminal stretch at 1 to 21 (MTLPDFRLIRLLPLASLVLTA) is a signal peptide. The N-palmitoyl cysteine moiety is linked to residue Cys22. A lipid anchor (S-diacylglycerol cysteine) is attached at Cys22.

This sequence belongs to the LolB family. As to quaternary structure, monomer.

Its subcellular location is the cell outer membrane. Functionally, plays a critical role in the incorporation of lipoproteins in the outer membrane after they are released by the LolA protein. This Salmonella schwarzengrund (strain CVM19633) protein is Outer-membrane lipoprotein LolB.